The sequence spans 308 residues: HPr kinase/phosphorylase (308 aa).

Catalysis depends on residues His-138 and Lys-159. 153–160 (GESGLGKS) is a binding site for ATP. Mg(2+) is bound at residue Ser-160. Asp-177 (proton acceptor; for phosphorylation activity. Proton donor; for dephosphorylation activity) is an active-site residue. Residues 201–210 (LEVRGLGLLD) form an important for the catalytic mechanism of both phosphorylation and dephosphorylation region. Glu-202 serves as a coordination point for Mg(2+). Residue Arg-243 is part of the active site. Residues 264–269 (QVAAGR) are important for the catalytic mechanism of dephosphorylation.

This sequence belongs to the HPrK/P family. In terms of assembly, homohexamer. Mg(2+) is required as a cofactor.

The enzyme catalyses [HPr protein]-L-serine + ATP = [HPr protein]-O-phospho-L-serine + ADP + H(+). It catalyses the reaction [HPr protein]-O-phospho-L-serine + phosphate + H(+) = [HPr protein]-L-serine + diphosphate. Functionally, catalyzes the ATP- as well as the pyrophosphate-dependent phosphorylation of a specific serine residue in HPr, a phosphocarrier protein of the phosphoenolpyruvate-dependent sugar phosphotransferase system (PTS). HprK/P also catalyzes the pyrophosphate-producing, inorganic phosphate-dependent dephosphorylation (phosphorolysis) of seryl-phosphorylated HPr (P-Ser-HPr). The polypeptide is HPr kinase/phosphorylase (Bordetella pertussis (strain Tohama I / ATCC BAA-589 / NCTC 13251)).